Here is a 128-residue protein sequence, read N- to C-terminus: Riboflavin kinase (128 aa).

12 to 17 (GKGEGK) contributes to the CDP binding site. Residues Thr41 and Asn43 each coordinate Mg(2+). Residues Thr97 and Glu105 each contribute to the FMN site. Residue 110–113 (IKLR) participates in CDP binding.

The protein belongs to the archaeal riboflavin kinase family. Mg(2+) is required as a cofactor.

It catalyses the reaction riboflavin + CTP = CDP + FMN + H(+). The protein operates within cofactor biosynthesis; FMN biosynthesis; FMN from riboflavin (CTP route): step 1/1. Catalyzes the CTP-dependent phosphorylation of riboflavin (vitamin B2) to form flavin mononucleotide (FMN). This is Riboflavin kinase from Methanococcus aeolicus (strain ATCC BAA-1280 / DSM 17508 / OCM 812 / Nankai-3).